The primary structure comprises 106 residues: Glutaredoxin-1 (106 aa).

Ala2 bears the N-acetylalanine mark. Residues 3 to 106 enclose the Glutaredoxin domain; that stretch reads QAFVNSKIQP…TRLQQIGALK (104 aa). Lys9 carries the post-translational modification N6-succinyllysine. 2 cysteine pairs are disulfide-bonded: Cys23–Cys26 and Cys79–Cys83.

It belongs to the glutaredoxin family.

It is found in the cytoplasm. Functionally, has a glutathione-disulfide oxidoreductase activity in the presence of NADPH and glutathione reductase. Reduces low molecular weight disulfides and proteins. The chain is Glutaredoxin-1 (GLRX) from Sus scrofa (Pig).